Consider the following 620-residue polypeptide: Probable indole-3-acetic acid-amido synthetase GH3.7 (620 aa).

This sequence belongs to the IAA-amido conjugating enzyme family. As to expression, ubiquitous.

Its function is as follows. May catalyze the synthesis of indole-3-acetic acid (IAA)-amino acid conjugates, providing a mechanism for the plant to cope with the presence of excess auxin. The protein is Probable indole-3-acetic acid-amido synthetase GH3.7 (GH3.7) of Oryza sativa subsp. japonica (Rice).